A 441-amino-acid chain; its full sequence is Transcriptional regulatory protein ZraR (441 aa).

The Response regulatory domain occupies 7–121 (DILVVDDDIS…NLQATLEKAL (115 aa)). D56 bears the 4-aspartylphosphate mark. The Sigma-54 factor interaction domain maps to 141 to 370 (MVGKSPAMQH…LENAVERAVV (230 aa)). ATP-binding residues include G172, T173, R329, and R359. The H-T-H motif DNA-binding region spans 421 to 440 (KTEAARQLGITRKTLLAKLS).

In terms of assembly, monomer. Post-translationally, phosphorylated by ZraS.

It localises to the cytoplasm. Activity of the ZraS/ZraR two-component system is repressed by the zinc-bound form of ZraP, which probably interacts with the periplasmic region of ZraS. Part of the Zra signaling pathway, an envelope stress response (ESR) system composed of the periplasmic accessory protein ZraP, the histidine kinase ZraS and the transcriptional regulator ZraR. The ZraPSR system contributes to antibiotic resistance and is important for membrane integrity in the presence of membrane-targeting biocides. ZraR is a member of the two-component regulatory system ZraS/ZraR. When activated by ZraS, acts in conjunction with sigma-54 to regulate the expression of zraP in the presence of high Zn(2+) or Pb(2+) concentrations. Also positively autoregulates the expression of the zraSR operon. Binds to a region within the zraP-zraSR intergenic region that is characterized by two inverted repeats separated by a 14 bp spacer. In addition, controls a regulon of genes of diverse functions that may be critical to maintain envelope integrity and cell survival under stressful conditions. The system has no direct role in zinc or copper resistance. The polypeptide is Transcriptional regulatory protein ZraR (Escherichia coli (strain K12)).